The primary structure comprises 194 residues: RNA polymerase II subunit A C-terminal domain phosphatase SSU72 like protein 5 (194 aa).

This sequence belongs to the SSU72 phosphatase family.

The protein localises to the nucleus. The enzyme catalyses O-phospho-L-seryl-[protein] + H2O = L-seryl-[protein] + phosphate. It catalyses the reaction O-phospho-L-threonyl-[protein] + H2O = L-threonyl-[protein] + phosphate. Functionally, protein phosphatase that catalyzes the dephosphorylation of the C-terminal domain of RNA polymerase II. Plays a role in RNA processing and termination. The chain is RNA polymerase II subunit A C-terminal domain phosphatase SSU72 like protein 5 from Homo sapiens (Human).